The primary structure comprises 220 residues: uncharacterized protein (220 aa).

It belongs to the DadA oxidoreductase family. FAD serves as cofactor.

This is an uncharacterized protein from Halorhodospira halophila (Ectothiorhodospira halophila).